The following is a 436-amino-acid chain: Septin-7 (436 aa).

N-acetylserine is present on S2. At Y29 the chain carries Phosphotyrosine. The region spanning 46–315 (RGFEFTLMVV…ENYRSRKLAA (270 aa)) is the Septin-type G domain. Positions 46–316 (RGFEFTLMVV…NYRSRKLAAV (271 aa)) are interaction with SEPTIN12. The G1 motif stretch occupies residues 56–63 (GESGLGKS). 56–63 (GESGLGKS) lines the GTP pocket. The residue at position 76 (S76) is a Phosphoserine. GTP contacts are provided by residues T89, G115, and 194 to 202 (KADTLTPEE). Residues 112 to 115 (DTPG) form a G3 motif region. The tract at residues 193-196 (AKAD) is G4 motif. T227 is modified (phosphothreonine). GTP contacts are provided by G249 and R264. Residues 331 to 436 (TKSPLAQMEE…EKNKKKGKIF (106 aa)) are a coiled coil. S333 carries the phosphoserine modification. Residue K372 is modified to N6-acetyllysine. The segment covering 377-409 (ELQRRHEQMKKNLEAQHKELEEKRRQFEEEKAN) has biased composition (basic and acidic residues). The segment at 377-436 (ELQRRHEQMKKNLEAQHKELEEKRRQFEEEKANWEAQQRILEQQNSSRTLEKNKKKGKIF) is disordered. At S423 the chain carries Phosphoserine. At T425 the chain carries Phosphothreonine.

It belongs to the TRAFAC class TrmE-Era-EngA-EngB-Septin-like GTPase superfamily. Septin GTPase family. In terms of assembly, septins polymerize into heterooligomeric protein complexes that form filaments, and associate with cellular membranes, actin filaments and microtubules. GTPase activity is required for filament formation. Filaments are assembled from asymmetrical heterotrimers, composed of SEPTIN2, SEPTIN6 and SEPTIN7 that associate head-to-head to form a hexameric unit. Within the trimer, directly interacts with SEPTIN6, while interaction with SEPTIN2 seems indirect. In the absence of SEPTIN6, forms homodimers. Interacts directly with CENPE and links CENPE to septin filaments composed of SEPTIN2, SEPTIN6 and SEPTIN7. Interacts with SEPTIN8, SEPTIN9 and SEPTIN11. Component of a septin core octameric complex consisting of SEPTIN12, SEPTIN7, SEPTIN6 and SEPTIN2 or SEPTIN4 in the order 12-7-6-2-2-6-7-12 or 12-7-6-4-4-6-7-12 and located in the sperm annulus; the SEPTIN12:SEPTIN7 association is mediated by the respective GTP-binding domains. Interacts with SEPTIN2 and SEPTIN5. As to expression, expressed in the cerebral cortex (at protein level).

Its subcellular location is the cytoplasm. The protein resides in the chromosome. It localises to the centromere. It is found in the kinetochore. The protein localises to the cytoskeleton. Its subcellular location is the spindle. The protein resides in the cleavage furrow. It localises to the midbody. It is found in the cilium axoneme. The protein localises to the cell projection. Its subcellular location is the cilium. The protein resides in the flagellum. Its function is as follows. Filament-forming cytoskeletal GTPase. Required for normal organization of the actin cytoskeleton. Required for normal progress through mitosis. Involved in cytokinesis. Required for normal association of CENPE with the kinetochore. Plays a role in ciliogenesis and collective cell movements. Forms a filamentous structure with SEPTIN12, SEPTIN6, SEPTIN2 and probably SEPTIN4 at the sperm annulus which is required for the structural integrity and motility of the sperm tail during postmeiotic differentiation. This chain is Septin-7, found in Mus musculus (Mouse).